The sequence spans 186 residues: ATP synthase subunit b (186 aa).

A helical transmembrane segment spans residues 25 to 45; sequence IVWSVVCVAIIAVVFYKYVIP.

Belongs to the ATPase B chain family. As to quaternary structure, F-type ATPases have 2 components, F(1) - the catalytic core - and F(0) - the membrane proton channel. F(1) has five subunits: alpha(3), beta(3), gamma(1), delta(1), epsilon(1). F(0) has three main subunits: a(1), b(2) and c(10-14). The alpha and beta chains form an alternating ring which encloses part of the gamma chain. F(1) is attached to F(0) by a central stalk formed by the gamma and epsilon chains, while a peripheral stalk is formed by the delta and b chains.

It localises to the cell membrane. Functionally, f(1)F(0) ATP synthase produces ATP from ADP in the presence of a proton or sodium gradient. F-type ATPases consist of two structural domains, F(1) containing the extramembraneous catalytic core and F(0) containing the membrane proton channel, linked together by a central stalk and a peripheral stalk. During catalysis, ATP synthesis in the catalytic domain of F(1) is coupled via a rotary mechanism of the central stalk subunits to proton translocation. Component of the F(0) channel, it forms part of the peripheral stalk, linking F(1) to F(0). The polypeptide is ATP synthase subunit b (Nocardia farcinica (strain IFM 10152)).